Consider the following 280-residue polypeptide: MEVIKSIDKMKQISFENILKGKKIGFVPTMGYLHEGHLSLVRAAREENDILVVSIFVNPTQFGPNEDFESYPRDLKRDLSLLEKENVDYVFVPEVSDMYPNDYSTFVEEVVLSKFLCGASRPGHFRGVCTVVTKFFNIVKPTRAYFGQKDAQQFRVLRRMVRDLNLDVELREMPIVRELDGLAMSSRNTYLNDVERNEATRLYKSLLKAKELIEKGEKDVLKIKDEMKKILDHPLLKIDYIEFVDEETLRPVEKIEGKVIVAIAVFVGKARLIDNIIVGG.

30–37 (MGYLHEGH) serves as a coordination point for ATP. His37 acts as the Proton donor in catalysis. Gln61 lines the (R)-pantoate pocket. A beta-alanine-binding site is contributed by Gln61. 147 to 150 (GQKD) lines the ATP pocket. Gln153 serves as a coordination point for (R)-pantoate. ATP-binding positions include Val176 and 184–187 (MSSR).

The protein belongs to the pantothenate synthetase family. As to quaternary structure, homodimer.

It localises to the cytoplasm. The catalysed reaction is (R)-pantoate + beta-alanine + ATP = (R)-pantothenate + AMP + diphosphate + H(+). It functions in the pathway cofactor biosynthesis; (R)-pantothenate biosynthesis; (R)-pantothenate from (R)-pantoate and beta-alanine: step 1/1. In terms of biological role, catalyzes the condensation of pantoate with beta-alanine in an ATP-dependent reaction via a pantoyl-adenylate intermediate. The sequence is that of Pantothenate synthetase from Thermosipho melanesiensis (strain DSM 12029 / CIP 104789 / BI429).